The chain runs to 192 residues: Lipid A acyltransferase PagP (192 aa).

An N-terminal signal peptide occupies residues Met1–Ala29. Catalysis depends on residues His64, Asp107, and Ser108.

Belongs to the lipid A palmitoyltransferase family. As to quaternary structure, homodimer.

It is found in the cell outer membrane. The enzyme catalyses a lipid A + a 1,2-diacyl-sn-glycero-3-phosphocholine = a hepta-acyl lipid A + a 2-acyl-sn-glycero-3-phosphocholine. It carries out the reaction a lipid IVA + a 1,2-diacyl-sn-glycero-3-phosphocholine = a lipid IVB + a 2-acyl-sn-glycero-3-phosphocholine. The catalysed reaction is a lipid IIA + a 1,2-diacyl-sn-glycero-3-phosphocholine = a lipid IIB + a 2-acyl-sn-glycero-3-phosphocholine. Its function is as follows. Transfers a fatty acid residue from the sn-1 position of a phospholipid to the N-linked hydroxyfatty acid chain on the proximal unit of lipid A or its precursors. The protein is Lipid A acyltransferase PagP of Citrobacter rodentium (strain ICC168) (Citrobacter freundii biotype 4280).